The sequence spans 1071 residues: Carbamoyl phosphate synthase large chain (1071 aa).

Positions 1–403 are carboxyphosphate synthetic domain; sequence MPKRTDLKSI…SFQKALRGLE (403 aa). Residues Arg-129, Arg-169, Gly-175, Gly-176, Gln-208, Val-210, Glu-215, Gly-241, Val-242, His-243, Gln-285, and Glu-299 each contribute to the ATP site. The ATP-grasp 1 domain occupies 133-328; the sequence is KEAMEKIGLS…IAKVAAKLAV (196 aa). Mg(2+) contacts are provided by Gln-285, Glu-299, and Asn-301. Mn(2+) is bound by residues Gln-285, Glu-299, and Asn-301. The segment at 404-548 is oligomerization domain; sequence TGLCGFNPRS…YSTYEEECES (145 aa). Residues 549–930 form a carbamoyl phosphate synthetic domain region; it reads RPSDRKKVMI…AYYKAQLGAG (382 aa). The 192-residue stretch at 673 to 864 folds into the ATP-grasp 2 domain; that stretch reads QKVLNDLGLR…LAKVGARCMA (192 aa). 10 residues coordinate ATP: Arg-709, Phe-748, Leu-750, Glu-755, Gly-780, Ile-781, His-782, Ser-783, Gln-823, and Glu-835. The Mg(2+) site is built by Gln-823, Glu-835, and Asn-837. Mn(2+) is bound by residues Gln-823, Glu-835, and Asn-837. One can recognise an MGS-like domain in the interval 931 to 1071; sequence ERLNPTGKIF…ELHGRLKNRN (141 aa). The segment at 931 to 1071 is allosteric domain; the sequence is ERLNPTGKIF…ELHGRLKNRN (141 aa).

The protein belongs to the CarB family. Composed of two chains; the small (or glutamine) chain promotes the hydrolysis of glutamine to ammonia, which is used by the large (or ammonia) chain to synthesize carbamoyl phosphate. Tetramer of heterodimers (alpha,beta)4. The cofactor is Mg(2+). It depends on Mn(2+) as a cofactor.

It carries out the reaction hydrogencarbonate + L-glutamine + 2 ATP + H2O = carbamoyl phosphate + L-glutamate + 2 ADP + phosphate + 2 H(+). The enzyme catalyses hydrogencarbonate + NH4(+) + 2 ATP = carbamoyl phosphate + 2 ADP + phosphate + 2 H(+). The protein operates within amino-acid biosynthesis; L-arginine biosynthesis; carbamoyl phosphate from bicarbonate: step 1/1. It functions in the pathway pyrimidine metabolism; UMP biosynthesis via de novo pathway; (S)-dihydroorotate from bicarbonate: step 1/3. Functionally, large subunit of the glutamine-dependent carbamoyl phosphate synthetase (CPSase). CPSase catalyzes the formation of carbamoyl phosphate from the ammonia moiety of glutamine, carbonate, and phosphate donated by ATP, constituting the first step of 2 biosynthetic pathways, one leading to arginine and/or urea and the other to pyrimidine nucleotides. The large subunit (synthetase) binds the substrates ammonia (free or transferred from glutamine from the small subunit), hydrogencarbonate and ATP and carries out an ATP-coupled ligase reaction, activating hydrogencarbonate by forming carboxy phosphate which reacts with ammonia to form carbamoyl phosphate. The sequence is that of Carbamoyl phosphate synthase large chain from Neisseria meningitidis serogroup B (strain ATCC BAA-335 / MC58).